Consider the following 201-residue polypeptide: ATP-dependent Clp protease proteolytic subunit (201 aa).

Ser-101 acts as the Nucleophile in catalysis. His-126 is an active-site residue.

It belongs to the peptidase S14 family. In terms of assembly, component of the chloroplastic Clp protease core complex.

It is found in the plastid. Its subcellular location is the chloroplast stroma. It catalyses the reaction Hydrolysis of proteins to small peptides in the presence of ATP and magnesium. alpha-casein is the usual test substrate. In the absence of ATP, only oligopeptides shorter than five residues are hydrolyzed (such as succinyl-Leu-Tyr-|-NHMec, and Leu-Tyr-Leu-|-Tyr-Trp, in which cleavage of the -Tyr-|-Leu- and -Tyr-|-Trp bonds also occurs).. Cleaves peptides in various proteins in a process that requires ATP hydrolysis. Has a chymotrypsin-like activity. Plays a major role in the degradation of misfolded proteins. The sequence is that of ATP-dependent Clp protease proteolytic subunit from Chaetosphaeridium globosum (Charophycean green alga).